The sequence spans 281 residues: NADPH-dependent 7-cyano-7-deazaguanine reductase (281 aa).

86-88 provides a ligand contact to substrate; it reads IES. Position 88–89 (88–89) interacts with NADPH; that stretch reads SK. Cys-189 functions as the Thioimide intermediate in the catalytic mechanism. Asp-196 serves as the catalytic Proton donor. 228-229 is a binding site for substrate; it reads HE. 257 to 258 contacts NADPH; that stretch reads RG.

This sequence belongs to the GTP cyclohydrolase I family. QueF type 2 subfamily. As to quaternary structure, homodimer.

The protein resides in the cytoplasm. The catalysed reaction is 7-aminomethyl-7-carbaguanine + 2 NADP(+) = 7-cyano-7-deazaguanine + 2 NADPH + 3 H(+). Its pathway is tRNA modification; tRNA-queuosine biosynthesis. Its function is as follows. Catalyzes the NADPH-dependent reduction of 7-cyano-7-deazaguanine (preQ0) to 7-aminomethyl-7-deazaguanine (preQ1). The protein is NADPH-dependent 7-cyano-7-deazaguanine reductase of Mannheimia succiniciproducens (strain KCTC 0769BP / MBEL55E).